Reading from the N-terminus, the 354-residue chain is Neutral protease 2 homolog BCIN_12g06300 (354 aa).

Positions 1-19 are cleaved as a signal peptide; the sequence is MRSFSKILAVASLAAIANS. A propeptide spanning residues 20-179 is cleaved from the precursor; it reads AVLKRDNNVL…PSSIDRRTVL (160 aa). 2 disulfide bridges follow: C183–C255 and C262–C280. Position 305 (H305) interacts with Zn(2+). The active site involves E306. Zn(2+)-binding residues include H309 and D320.

The protein belongs to the peptidase M35 family. The cofactor is Zn(2+).

Its subcellular location is the secreted. The catalysed reaction is Preferential cleavage of bonds with hydrophobic residues in P1'. Also 3-Asn-|-Gln-4 and 8-Gly-|-Ser-9 bonds in insulin B chain.. Its function is as follows. Secreted metalloproteinase that allows assimilation of proteinaceous substrates. Shows high activities on basic nuclear substrates such as histone and protamine. The sequence is that of Neutral protease 2 homolog BCIN_12g06300 from Botryotinia fuckeliana (strain B05.10) (Noble rot fungus).